A 539-amino-acid polypeptide reads, in one-letter code: T-complex protein 1 subunit zeta (539 aa).

The protein belongs to the TCP-1 chaperonin family. Heterooligomeric complex of about 850 to 900 kDa that forms two stacked rings, 12 to 16 nm in diameter.

It localises to the cytoplasm. Functionally, molecular chaperone; assists the folding of proteins upon ATP hydrolysis. Known to play a role, in vitro, in the folding of actin and tubulin. The chain is T-complex protein 1 subunit zeta (cct6) from Dictyostelium discoideum (Social amoeba).